A 102-amino-acid chain; its full sequence is Large ribosomal subunit protein bL21 (102 aa).

Belongs to the bacterial ribosomal protein bL21 family. Part of the 50S ribosomal subunit. Contacts protein L20.

Functionally, this protein binds to 23S rRNA in the presence of protein L20. In Lachnospira eligens (strain ATCC 27750 / DSM 3376 / VPI C15-48 / C15-B4) (Eubacterium eligens), this protein is Large ribosomal subunit protein bL21.